The following is a 476-amino-acid chain: Glutamate--tRNA ligase (476 aa).

The short motif at proline 9–threonine 19 is the 'HIGH' region element. Positions lysine 248–arginine 252 match the 'KMSKS' region motif. Lysine 251 serves as a coordination point for ATP.

This sequence belongs to the class-I aminoacyl-tRNA synthetase family. Glutamate--tRNA ligase type 1 subfamily. As to quaternary structure, monomer.

The protein resides in the cytoplasm. The enzyme catalyses tRNA(Glu) + L-glutamate + ATP = L-glutamyl-tRNA(Glu) + AMP + diphosphate. Functionally, catalyzes the attachment of glutamate to tRNA(Glu) in a two-step reaction: glutamate is first activated by ATP to form Glu-AMP and then transferred to the acceptor end of tRNA(Glu). The polypeptide is Glutamate--tRNA ligase (Synechococcus sp. (strain CC9311)).